We begin with the raw amino-acid sequence, 406 residues long: MSRRRISCKDLGHADCQGWLYKKKEKGTFLSNKWKKFWVVLKGSSLYWYGNQLAEKADGFVNLPDFTVERASECKKKNAFKINHPQIKTFYFAAENLQEMNMWLNKLGFAVTHKESTTKDEECYSESEQEDPETAVEAPPPPSASATSSPVAARRASSSSPKRRETSCSFSSLENTVKAPSRFSSSGSKERQSWLDIVNSSPATEDVGHPLSFAVQVHTLASSEASSCRVSENSSTTPESGCLNSLSSDDTSSLNNSQDHLTVPDRASGSRMTDRDEIKSSEDDEMEKLYKSLEQASLSPLGDRRPSTKKELRKSFVKRCKNPSINEKLHKIRTLNSTLKCKEHDLAMINQLLDDPKLTARKYREWKVMNTLLIQDIYQQQVPQDPEVTPQEIMNPTSSDCVENSL.

Positions 13-112 constitute a PH domain; that stretch reads HADCQGWLYK…WLNKLGFAVT (100 aa). 3 disordered regions span residues 118 to 173, 228 to 285, and 383 to 406; these read TKDE…FSSL, CRVS…EDDE, and PQDP…ENSL. A compositionally biased stretch (acidic residues) spans 123-134; that stretch reads CYSESEQEDPET. Residues 144-160 show a composition bias toward low complexity; it reads ASATSSPVAARRASSSS. The segment covering 228–239 has biased composition (polar residues); the sequence is CRVSENSSTTPE. Residues 243–259 show a composition bias toward low complexity; the sequence is LNSLSSDDTSSLNNSQD. Basic and acidic residues predominate over residues 272–285; that stretch reads MTDRDEIKSSEDDE. Residues 285–406 form a necessary for interaction with PSCD2 and to translocate to the plasma membrane region; the sequence is EMEKLYKSLE…TSSDCVENSL (122 aa). Positions 392–406 are enriched in polar residues; it reads EIMNPTSSDCVENSL.

Interacts with guanine-nucleotide exchange factors PSCD1, PSCD2, PSCD3 and PSCD4. As to expression, expressed in brain, spleen, lung, testis and kidney.

The protein resides in the cytoplasm. Its subcellular location is the cell membrane. Functionally, enhances the promotion of guanine-nucleotide exchange by PSCD2 on ARF6 in a concentration-dependent manner. The sequence is that of Interactor protein for cytohesin exchange factors 1 (Ipcef1) from Rattus norvegicus (Rat).